The primary structure comprises 453 residues: Ribosome biogenesis protein SSF1 (453 aa).

Residues 1 to 11 are compositionally biased toward basic residues; sequence MAKRRQKKRTH. Disordered stretches follow at residues 1-22, 275-324, and 374-453; these read MAKRRQKKRTHAQLTPEQEQGI, KAKH…PRKK, and KMRL…SEVE. In terms of domain architecture, Brix spans 26 to 348; that stretch reads MVIRVGQTSL…LVKIEEGICS (323 aa). Basic and acidic residues predominate over residues 288 to 300; that stretch reads PVEKKDNKEREKE. A Phosphothreonine modification is found at Thr301. Residues 374-398 show a composition bias toward basic and acidic residues; sequence KMRLKEQRKKEQEENIAKKKAVKDA. Basic residues predominate over residues 399-409; it reads KKQRKLERRKA. Positions 410-423 are enriched in basic and acidic residues; sequence RAAEGGEGQGKDDA. The segment covering 442 to 453 has biased composition (acidic residues); it reads EDLDSDLFSEVE.

In terms of assembly, part of a complex that includes BRX1, RPF1, RPF2 and SSF1 or SSF2.

The protein localises to the nucleus. The protein resides in the nucleolus. Required for biogenesis of the 60S ribosomal subunit. This Saccharomyces cerevisiae (strain ATCC 204508 / S288c) (Baker's yeast) protein is Ribosome biogenesis protein SSF1 (SSF1).